Consider the following 380-residue polypeptide: Succinyl-diaminopimelate desuccinylase (380 aa).

Position 68 (His68) interacts with Zn(2+). Residue Asp70 is part of the active site. Zn(2+) is bound at residue Asp101. Glu135 functions as the Proton acceptor in the catalytic mechanism. 3 residues coordinate Zn(2+): Glu136, Glu164, and His350.

Belongs to the peptidase M20A family. DapE subfamily. In terms of assembly, homodimer. It depends on Zn(2+) as a cofactor. Co(2+) serves as cofactor.

It catalyses the reaction N-succinyl-(2S,6S)-2,6-diaminopimelate + H2O = (2S,6S)-2,6-diaminopimelate + succinate. It participates in amino-acid biosynthesis; L-lysine biosynthesis via DAP pathway; LL-2,6-diaminopimelate from (S)-tetrahydrodipicolinate (succinylase route): step 3/3. Functionally, catalyzes the hydrolysis of N-succinyl-L,L-diaminopimelic acid (SDAP), forming succinate and LL-2,6-diaminopimelate (DAP), an intermediate involved in the bacterial biosynthesis of lysine and meso-diaminopimelic acid, an essential component of bacterial cell walls. The chain is Succinyl-diaminopimelate desuccinylase from Tolumonas auensis (strain DSM 9187 / NBRC 110442 / TA 4).